A 168-amino-acid polypeptide reads, in one-letter code: Phosphopantetheine adenylyltransferase (168 aa).

Thr14 contacts substrate. ATP contacts are provided by residues 14–15 and His22; that span reads TF. Substrate contacts are provided by Lys46, Leu78, and Arg92. ATP-binding positions include 93 to 95, Glu103, and 128 to 134; these read GLR and YSFISSS.

It belongs to the bacterial CoaD family. In terms of assembly, homohexamer. Requires Mg(2+) as cofactor.

Its subcellular location is the cytoplasm. It catalyses the reaction (R)-4'-phosphopantetheine + ATP + H(+) = 3'-dephospho-CoA + diphosphate. The protein operates within cofactor biosynthesis; coenzyme A biosynthesis; CoA from (R)-pantothenate: step 4/5. Functionally, reversibly transfers an adenylyl group from ATP to 4'-phosphopantetheine, yielding dephospho-CoA (dPCoA) and pyrophosphate. The protein is Phosphopantetheine adenylyltransferase of Xanthomonas oryzae pv. oryzae (strain MAFF 311018).